The primary structure comprises 284 residues: uncharacterized protein (284 aa).

This sequence to E.coli YnjA.

This is an uncharacterized protein from Mycobacterium tuberculosis (strain CDC 1551 / Oshkosh).